The sequence spans 147 residues: Large ribosomal subunit protein uL13 (147 aa).

It belongs to the universal ribosomal protein uL13 family. Part of the 50S ribosomal subunit.

Functionally, this protein is one of the early assembly proteins of the 50S ribosomal subunit, although it is not seen to bind rRNA by itself. It is important during the early stages of 50S assembly. The sequence is that of Large ribosomal subunit protein uL13 from Polaromonas naphthalenivorans (strain CJ2).